The chain runs to 443 residues: Trigger factor (443 aa).

Residues Gly-165 to Ala-250 enclose the PPIase FKBP-type domain.

It belongs to the FKBP-type PPIase family. Tig subfamily.

It localises to the cytoplasm. It carries out the reaction [protein]-peptidylproline (omega=180) = [protein]-peptidylproline (omega=0). In terms of biological role, involved in protein export. Acts as a chaperone by maintaining the newly synthesized protein in an open conformation. Functions as a peptidyl-prolyl cis-trans isomerase. The protein is Trigger factor of Roseobacter denitrificans (strain ATCC 33942 / OCh 114) (Erythrobacter sp. (strain OCh 114)).